Consider the following 329-residue polypeptide: Beta-tectorin (329 aa).

Positions 1–17 are cleaved as a signal peptide; that stretch reads MVTKAFVLLAIFAEASA. In terms of domain architecture, ZP spans 19 to 283; it reads SCAPNKADVI…LSCPVTCDKR (265 aa). N-linked (GlcNAc...) asparagine glycosylation is found at asparagine 80, asparagine 104, asparagine 116, and asparagine 145. An intrachain disulfide couples cysteine 204 to cysteine 264. Residue glycine 305 is the site of GPI-anchor amidated glycine attachment. Positions 306-329 are cleaved as a propeptide — removed in mature form; the sequence is FSSLYSFSDVLHHLIMMLGICAVL.

May form homomeric filament after self-association or heteromeric filament after association with alpha-tectorin. Interacts with CEACAM16. In terms of processing, the presence of a hydrophobic C-terminus preceded by a potential cleavage site strongly suggests that tectorins are synthesized as glycosylphosphatidylinositol-linked, membrane-bound precursors. Tectorins are targeted to the apical surface of the inner ear epithelia by the lipid and proteolytically released into the extracellular compartment.

The protein localises to the cell membrane. It is found in the secreted. The protein resides in the extracellular space. It localises to the extracellular matrix. Its function is as follows. One of the major non-collagenous components of the tectorial membrane. The tectorial membrane is an extracellular matrix of the inner ear that covers the neuroepithelium of the cochlea and contacts the stereocilia bundles of specialized sensory hair cells. Sound induces movement of these hair cells relative to the tectorial membrane, deflects the stereocilia and leads to fluctuations in hair-cell membrane potential, transducing sound into electrical signals. The sequence is that of Beta-tectorin (TECTB) from Homo sapiens (Human).